Consider the following 498-residue polypeptide: Protein translocase subunit SecY (498 aa).

10 helical membrane-spanning segments follow: residues 23 to 43, 65 to 87, 124 to 144, 163 to 183, 191 to 211, 229 to 249, 281 to 301, 322 to 342, 382 to 402, and 406 to 426; these read FVIS…ISVI, FDLF…VGIS, ITRF…IALI, AFYI…GDII, GITL…FIVM, AINF…ISFV, AAGV…ITIA, PVGI…YSYI, FIGA…SLVL, and TTLS…MELY. The span at 478-488 shows a compositional bias: basic and acidic residues; it reads VEPTQDKKKNP. The segment at 478 to 498 is disordered; sequence VEPTQDKKKNPSDPLEVSQLW.

It belongs to the SecY/SEC61-alpha family. In terms of assembly, component of the Sec protein translocase complex. Heterotrimer consisting of SecY, SecE and SecG subunits. The heterotrimers can form oligomers, although 1 heterotrimer is thought to be able to translocate proteins. Interacts with the ribosome. Interacts with SecDF, and other proteins may be involved. Interacts with SecA.

The protein localises to the cell membrane. In terms of biological role, the central subunit of the protein translocation channel SecYEG. Consists of two halves formed by TMs 1-5 and 6-10. These two domains form a lateral gate at the front which open onto the bilayer between TMs 2 and 7, and are clamped together by SecE at the back. The channel is closed by both a pore ring composed of hydrophobic SecY resides and a short helix (helix 2A) on the extracellular side of the membrane which forms a plug. The plug probably moves laterally to allow the channel to open. The ring and the pore may move independently. In Mycoplasmoides gallisepticum (strain R(low / passage 15 / clone 2)) (Mycoplasma gallisepticum), this protein is Protein translocase subunit SecY.